We begin with the raw amino-acid sequence, 739 residues long: Catalase-peroxidase (739 aa).

Positions 1 to 20 are disordered; that stretch reads MGSNECPYSRQNANIGGGGQ. Positions 94 to 217 form a cross-link, tryptophyl-tyrosyl-methioninium (Trp-Tyr) (with M-243); it reads WHSAGTYRVF…LAASHMGLIY (124 aa). The active-site Proton acceptor is histidine 95. The tryptophyl-tyrosyl-methioninium (Tyr-Met) (with W-94) cross-link spans 217 to 243; it reads YVNPEGPNKNPDPVLAAKDIRITFGRM. Histidine 258 lines the heme b pocket.

It belongs to the peroxidase family. Peroxidase/catalase subfamily. In terms of assembly, homodimer or homotetramer. Heme b serves as cofactor. In terms of processing, formation of the three residue Trp-Tyr-Met cross-link is important for the catalase, but not the peroxidase activity of the enzyme.

The protein localises to the cytoplasm. The catalysed reaction is H2O2 + AH2 = A + 2 H2O. It catalyses the reaction 2 H2O2 = O2 + 2 H2O. Bifunctional enzyme with both catalase and broad-spectrum peroxidase activity. This Emericella nidulans (strain FGSC A4 / ATCC 38163 / CBS 112.46 / NRRL 194 / M139) (Aspergillus nidulans) protein is Catalase-peroxidase.